Consider the following 404-residue polypeptide: Keratin, type I cuticular Ha3-I (404 aa).

The interval 1 to 56 is head; it reads MSYSCGLPSLSCRTSCSSRPCVPPSCHGCTLPGACNIPANVSNCNWFCEGSFNGSE. Residues 56 to 367 form the IF rod domain; sequence EKETMQFLND…SLLESEDCKL (312 aa). The interval 57-91 is coil 1A; the sequence is KETMQFLNDRLASYLEKVRQLERDNAELENLIRER. The tract at residues 92-102 is linker 1; the sequence is SQQQEPLVCAS. The tract at residues 103 to 203 is coil 1B; it reads YQSYFKTIEE…HEQEVNTLRC (101 aa). Residues 204–219 are linker 12; that stretch reads QLGDRLNVEVDAAPTV. The interval 220–363 is coil 2; sequence DLNQVLNETR…NTYRSLLESE (144 aa). Residues 364 to 404 form a tail region; that stretch reads DCKLPSNPCATTNACDKSTGPCISNPCGLRARCGPCNTFGY.

This sequence belongs to the intermediate filament family. As to expression, expressed in the hair follicles.

In Homo sapiens (Human), this protein is Keratin, type I cuticular Ha3-I (KRT33A).